Here is a 123-residue protein sequence, read N- to C-terminus: Ribosome-binding factor A (123 aa).

Belongs to the RbfA family. Monomer. Binds 30S ribosomal subunits, but not 50S ribosomal subunits or 70S ribosomes.

The protein localises to the cytoplasm. Functionally, one of several proteins that assist in the late maturation steps of the functional core of the 30S ribosomal subunit. Associates with free 30S ribosomal subunits (but not with 30S subunits that are part of 70S ribosomes or polysomes). Required for efficient processing of 16S rRNA. May interact with the 5'-terminal helix region of 16S rRNA. This is Ribosome-binding factor A from Cupriavidus metallidurans (strain ATCC 43123 / DSM 2839 / NBRC 102507 / CH34) (Ralstonia metallidurans).